Reading from the N-terminus, the 425-residue chain is Adenylosuccinate synthetase (425 aa).

GTP is bound by residues 12 to 18 (GDEGKGK) and 40 to 42 (GHT). The Proton acceptor role is filled by Asp13. Asp13 and Gly40 together coordinate Mg(2+). IMP contacts are provided by residues 13–16 (DEGK), 38–41 (NAGH), Thr129, Arg143, Asn221, Thr236, and Arg300. His41 serves as the catalytic Proton donor. 296 to 302 (VTTGRKR) contacts substrate. GTP-binding positions include Arg302, 328 to 330 (KLD), and 410 to 412 (GVG).

The protein belongs to the adenylosuccinate synthetase family. As to quaternary structure, homodimer. Mg(2+) is required as a cofactor.

It localises to the cytoplasm. It catalyses the reaction IMP + L-aspartate + GTP = N(6)-(1,2-dicarboxyethyl)-AMP + GDP + phosphate + 2 H(+). It functions in the pathway purine metabolism; AMP biosynthesis via de novo pathway; AMP from IMP: step 1/2. Its function is as follows. Plays an important role in the de novo pathway and in the salvage pathway of purine nucleotide biosynthesis. Catalyzes the first committed step in the biosynthesis of AMP from IMP. This Phaeosphaeria nodorum (strain SN15 / ATCC MYA-4574 / FGSC 10173) (Glume blotch fungus) protein is Adenylosuccinate synthetase.